We begin with the raw amino-acid sequence, 490 residues long: ATP synthase subunit beta, plastid (490 aa).

G170–T177 is a binding site for ATP.

The protein belongs to the ATPase alpha/beta chains family. As to quaternary structure, F-type ATPases have 2 components, CF(1) - the catalytic core - and CF(0) - the membrane proton channel. CF(1) has five subunits: alpha(3), beta(3), gamma(1), delta(1), epsilon(1). CF(0) has four main subunits: a(1), b(1), b'(1) and c(9-12).

It is found in the plastid thylakoid membrane. It carries out the reaction ATP + H2O + 4 H(+)(in) = ADP + phosphate + 5 H(+)(out). Produces ATP from ADP in the presence of a proton gradient across the membrane. The catalytic sites are hosted primarily by the beta subunits. This chain is ATP synthase subunit beta, plastid, found in Cuscuta reflexa (Southern Asian dodder).